Here is a 476-residue protein sequence, read N- to C-terminus: Aspartyl/glutamyl-tRNA(Asn/Gln) amidotransferase subunit B (476 aa).

It belongs to the GatB/GatE family. GatB subfamily. Heterotrimer of A, B and C subunits.

It carries out the reaction L-glutamyl-tRNA(Gln) + L-glutamine + ATP + H2O = L-glutaminyl-tRNA(Gln) + L-glutamate + ADP + phosphate + H(+). The enzyme catalyses L-aspartyl-tRNA(Asn) + L-glutamine + ATP + H2O = L-asparaginyl-tRNA(Asn) + L-glutamate + ADP + phosphate + 2 H(+). Its function is as follows. Allows the formation of correctly charged Asn-tRNA(Asn) or Gln-tRNA(Gln) through the transamidation of misacylated Asp-tRNA(Asn) or Glu-tRNA(Gln) in organisms which lack either or both of asparaginyl-tRNA or glutaminyl-tRNA synthetases. The reaction takes place in the presence of glutamine and ATP through an activated phospho-Asp-tRNA(Asn) or phospho-Glu-tRNA(Gln). In Lactobacillus delbrueckii subsp. bulgaricus (strain ATCC 11842 / DSM 20081 / BCRC 10696 / JCM 1002 / NBRC 13953 / NCIMB 11778 / NCTC 12712 / WDCM 00102 / Lb 14), this protein is Aspartyl/glutamyl-tRNA(Asn/Gln) amidotransferase subunit B.